The chain runs to 223 residues: Lipoprotein-releasing system ATP-binding protein LolD (223 aa).

The ABC transporter domain maps to 2 to 223 (IQVRNLKKTF…LRDGEIVTCA (222 aa)). ATP is bound at residue 38–45 (GVSGAGKT).

This sequence belongs to the ABC transporter superfamily. Lipoprotein translocase (TC 3.A.1.125) family. In terms of assembly, the complex is composed of two ATP-binding proteins (LolD) and two transmembrane proteins (LolC and LolE).

The protein resides in the cell inner membrane. Part of the ABC transporter complex LolCDE involved in the translocation of mature outer membrane-directed lipoproteins, from the inner membrane to the periplasmic chaperone, LolA. Responsible for the formation of the LolA-lipoprotein complex in an ATP-dependent manner. This Syntrophus aciditrophicus (strain SB) protein is Lipoprotein-releasing system ATP-binding protein LolD.